A 131-amino-acid chain; its full sequence is Classical arabinogalactan protein 2 (131 aa).

Residues 1–21 form the signal peptide; sequence MNSKAMQALIFLGFLATSCLA. Gln22 carries the post-translational modification Pyrrolidone carboxylic acid. Pro24, Pro26, Pro28, Pro34, and Pro35 each carry 4-hydroxyproline. Pro24, Pro26, Pro28, Pro34, and Pro35 each carry an O-linked (Ara...) hydroxyproline glycan. A disordered region spans residues 24–106; it reads PAPAPTTVTP…PGPDGAADAP (83 aa). 2 stretches are compositionally biased toward pro residues: residues 25–38 and 49–64; these read APAPTTVTPPPTAL and IASPPVPVNEPTPAPT. Composition is skewed to low complexity over residues 65–76 and 90–106; these read TSPTTSPVASPP and TPTSSPAPGPDGAADAP. A lipid anchor (GPI-anchor amidated serine) is attached at Ser107. Residues 108–131 constitute a propeptide, removed in mature form; the sequence is AAWANKAFLVGTAVAGALYAVVLA.

This sequence belongs to the classical AGP family. O-glycosylated on hydroxyprolines; noncontiguous hydroxylproline residues are glycosylated with arabinogalactan.

The protein resides in the cell membrane. Proteoglycan that seems to be implicated in diverse developmental roles such as differentiation, cell-cell recognition, embryogenesis and programmed cell death. The polypeptide is Classical arabinogalactan protein 2 (AGP2) (Arabidopsis thaliana (Mouse-ear cress)).